Reading from the N-terminus, the 350-residue chain is C5a anaphylatoxin chemotactic receptor 1 (350 aa).

Residues 1-37 (MDSFDYTTPDYGHYDDKDTLDLNTPVDKTSNTLRVPD) are Extracellular-facing. A required for CHIPS binding region spans residues 10–18 (DYGHYDDKD). Tyr11 and Tyr14 each carry sulfotyrosine. The involved in C5a binding stretch occupies residues 21–30 (DLNTPVDKTS). Residues 38 to 64 (ILALVIFAVVFLVGVLGNALVVWVTAF) traverse the membrane as a helical segment. Topologically, residues 65 to 69 (EAKRT) are cytoplasmic. The helical transmembrane segment at 70-93 (INAIWFLNLAVADFLSCLALPILF) threads the bilayer. Topologically, residues 94–110 (TSIVQHHHWPFGGAACS) are extracellular. Cys109 and Cys188 are oxidised to a cystine. A helical membrane pass occupies residues 111–132 (ILPSLILLNMYASILLLATISA). Over 133–153 (DRFLLVFKPIWCQNFRGAGLA) the chain is Cytoplasmic. The chain crosses the membrane as a helical span at residues 154–174 (WIACAVAWGLALLLTIPSFLY). At 175 to 200 (RVVREEYFPPKVLCGVDYSHDKRRER) the chain is on the extracellular side. The chain crosses the membrane as a helical span at residues 201–226 (AVAIVRLVLGFLWPLLTLMICYTFIL). Over 227–242 (LRTWSRRATRSTKTLK) the chain is Cytoplasmic. Residues 243–265 (VVVAVVASFFIFWLPYQVTGIMM) traverse the membrane as a helical segment. The Extracellular segment spans residues 266-282 (SFLEPSSPTFRLLKKLD). A helical membrane pass occupies residues 283-303 (SLCVSFAYINCCINPIIYVVA). The Cytoplasmic portion of the chain corresponds to 304-350 (GQGFQGRLQKSLPSLLRNVLTEESVVRESKSFARSTVDTMADKTQAV). Residues Ser314, Ser317, Ser327, Ser332, Ser334, and Ser338 each carry the phosphoserine modification.

The protein belongs to the G-protein coupled receptor 1 family. Homodimer. May also form higher-order oligomers. Interacts (when phosphorylated) with ARRB1 and ARRB2; the interaction is associated with internalization of C5aR. Interacts (via N-terminal domain) with S.aureus chemotaxis inhibitory protein (CHIPS); the interaction blocks the receptor and may thus inhibit the immune response. In terms of processing, sulfation plays a critical role in the association of C5aR with C5a, but no significant role in the ability of the receptor to transduce a signal and mobilize calcium in response to a small peptide agonist. Sulfation at Tyr-14 is important for CHIPS binding. Post-translationally, phosphorylated on serine residues in response to C5a binding, resulting in internalization of the receptor and short-term desensitization to C5a.

It is found in the cell membrane. Its subcellular location is the cytoplasmic vesicle. Functionally, receptor for the chemotactic and inflammatory peptide anaphylatoxin C5a. The ligand interacts with at least two sites on the receptor: a high-affinity site on the extracellular N-terminus, and a second site in the transmembrane region which activates downstream signaling events. Receptor activation stimulates chemotaxis, granule enzyme release, intracellular calcium release and superoxide anion production. This Pan troglodytes (Chimpanzee) protein is C5a anaphylatoxin chemotactic receptor 1 (C5AR1).